The chain runs to 514 residues: Light-independent protochlorophyllide reductase subunit B (514 aa).

Residue D36 participates in [4Fe-4S] cluster binding. The Proton donor role is filled by D300. Residue 435–436 (GM) coordinates substrate.

It belongs to the ChlB/BchB/BchZ family. As to quaternary structure, protochlorophyllide reductase is composed of three subunits; ChlL, ChlN and ChlB. Forms a heterotetramer of two ChlB and two ChlN subunits. Requires [4Fe-4S] cluster as cofactor.

The protein localises to the plastid. The protein resides in the chloroplast. It catalyses the reaction chlorophyllide a + oxidized 2[4Fe-4S]-[ferredoxin] + 2 ADP + 2 phosphate = protochlorophyllide a + reduced 2[4Fe-4S]-[ferredoxin] + 2 ATP + 2 H2O. It functions in the pathway porphyrin-containing compound metabolism; chlorophyll biosynthesis (light-independent). Functionally, component of the dark-operative protochlorophyllide reductase (DPOR) that uses Mg-ATP and reduced ferredoxin to reduce ring D of protochlorophyllide (Pchlide) to form chlorophyllide a (Chlide). This reaction is light-independent. The NB-protein (ChlN-ChlB) is the catalytic component of the complex. In Pleurastrum terricola (Filamentous green alga), this protein is Light-independent protochlorophyllide reductase subunit B.